The following is an 804-amino-acid chain: Cell surface sensor MSB2 (804 aa).

Positions 1–20 are cleaved as a signal peptide; it reads MHNFSKLAVAFVAAASFASA. Over 21–694 the chain is Extracellular; that stretch reads EPETKAKVER…TNQSATQRGT (674 aa). Residue Asn-45 is glycosylated (N-linked (GlcNAc...) asparagine). Low complexity-rich tracts occupy residues 46-58 and 69-80; these read TTTP…SSTS and SSFSSSASSSSA. Disordered stretches follow at residues 46–90 and 105–220; these read TTTP…RQPT and TDST…ATSN. Positions 46–475 are serine/threonine rich region (STR); that stretch reads TTTPASEASS…SVAPTSATSS (430 aa). Composition is skewed to polar residues over residues 81 to 90 and 109 to 126; these read QELTASRQPT and PFSQ…SATG. Low complexity-rich tracts occupy residues 128–143 and 150–169; these read VTPI…PSTA and SALT…SVTS. Asn-157 carries N-linked (GlcNAc...) asparagine glycosylation. A compositionally biased stretch (polar residues) spans 170–188; it reads PGSTSGPAGTPESSSASDF. A compositionally biased stretch (low complexity) spans 189-202; sequence TSAVATSRASTATS. 4 N-linked (GlcNAc...) asparagine glycosylation sites follow: Asn-298, Asn-308, Asn-357, and Asn-393. Residues 345–394 show a composition bias toward polar residues; the sequence is VQTLPPVSTPTANGTVTSPPVDSQTTVLPTTTPGLSSDTIVTSPGVTANS. The tract at residues 345 to 516 is disordered; sequence VQTLPPVSTP…APTVLPSDLP (172 aa). Composition is skewed to low complexity over residues 395–407 and 427–476; these read TQVP…TIPT and NNTV…TSSA. Asn-427 and Asn-433 each carry an N-linked (GlcNAc...) asparagine glycan. The segment at 482–641 is HKR11-MSB2 homology domain (HMH); it reads WLPTTIIVQA…NGMLAHNLTM (160 aa). The span at 493–508 shows a compositional bias: polar residues; it reads LPSTTGSSTNAPSSAP. Asn-629, Asn-638, Asn-669, Asn-683, and Asn-686 each carry an N-linked (GlcNAc...) asparagine glycan. The interval 658–689 is disordered; sequence KPAGAGSGTGGNGSNGPNDVFNNDNNSTNQSA. Residues 660–671 are compositionally biased toward gly residues; sequence AGAGSGTGGNGS. The segment covering 672-686 has biased composition (low complexity); the sequence is NGPNDVFNNDNNSTN. A helical membrane pass occupies residues 695 to 715; it reads VAGIAFGAVSLAAAYGAAMFI. The Cytoplasmic segment spans residues 716–804; sequence VARRYKKKRQ…VAQENSLGWN (89 aa). Disordered stretches follow at residues 724–748 and 762–804; these read RQAH…PALM and GVMG…LGWN. The span at 731–744 shows a compositional bias: polar residues; that stretch reads SSVATPSEMRQSGS. Positions 774 to 787 are enriched in low complexity; the sequence is GSNGSGRSAGNSAR.

The protein belongs to the HKR1/MSB2 family.

Its subcellular location is the cell membrane. It is found in the vacuole membrane. Its function is as follows. MSB2 and SHO1 have overlapping functions in recognizing various surface signals for MAPK PMK1 activation and appressorium formation. While MSB2 is critical for sensing surface hydrophobicity and cutin monomers, SHO1 may play a more important role in recognizing rice leaf waxes. The protein is Cell surface sensor MSB2 of Pyricularia oryzae (strain 70-15 / ATCC MYA-4617 / FGSC 8958) (Rice blast fungus).